A 62-amino-acid chain; its full sequence is Large ribosomal subunit protein uL30 (62 aa).

This sequence belongs to the universal ribosomal protein uL30 family. As to quaternary structure, part of the 50S ribosomal subunit.

This Gluconobacter oxydans (strain 621H) (Gluconobacter suboxydans) protein is Large ribosomal subunit protein uL30.